Consider the following 43-residue polypeptide: Protein PsbN (43 aa).

A helical transmembrane segment spans residues 7–27; that stretch reads VAIFISCLLVSFTGYALYTAF.

The protein belongs to the PsbN family.

It is found in the plastid. The protein localises to the chloroplast thylakoid membrane. In terms of biological role, may play a role in photosystem I and II biogenesis. The chain is Protein PsbN from Zygnema circumcarinatum (Green alga).